We begin with the raw amino-acid sequence, 381 residues long: Chorismate synthase (381 aa).

Residues R39 and R45 each contribute to the NADP(+) site. FMN is bound by residues 127 to 129, 248 to 249, G293, 308 to 312, and R334; these read RAS, QS, and KPIPT.

This sequence belongs to the chorismate synthase family. As to quaternary structure, homotetramer. FMNH2 is required as a cofactor.

The catalysed reaction is 5-O-(1-carboxyvinyl)-3-phosphoshikimate = chorismate + phosphate. It participates in metabolic intermediate biosynthesis; chorismate biosynthesis; chorismate from D-erythrose 4-phosphate and phosphoenolpyruvate: step 7/7. Catalyzes the anti-1,4-elimination of the C-3 phosphate and the C-6 proR hydrogen from 5-enolpyruvylshikimate-3-phosphate (EPSP) to yield chorismate, which is the branch point compound that serves as the starting substrate for the three terminal pathways of aromatic amino acid biosynthesis. This reaction introduces a second double bond into the aromatic ring system. The polypeptide is Chorismate synthase (Caldicellulosiruptor saccharolyticus (strain ATCC 43494 / DSM 8903 / Tp8T 6331)).